A 164-amino-acid polypeptide reads, in one-letter code: uncharacterized protein (164 aa).

Residues 1-77 are disordered; that stretch reads MGQKKTMGTE…PCSIRDAPFH (77 aa).

This is an uncharacterized protein from Homo sapiens (Human).